The sequence spans 498 residues: Transcription factor kayak (498 aa).

Over residues 108 to 127 the composition is skewed to polar residues; sequence ASLGQGSESEDSNASYNDTQ. 2 disordered regions span residues 108–144 and 177–234; these read ASLG…HTDS and GSAS…KRRV. Low complexity-rich tracts occupy residues 135–144 and 177–191; these read TDTSSAHTDS and GSAS…TSNT. The bZIP domain maps to 212-275; that stretch reads EQKRAVRRER…KQLEYLLATH (64 aa). The segment at 214 to 233 is basic motif; the sequence is KRAVRRERNKQAAARCRKRR. The leucine-zipper stretch occupies residues 240–247; that stretch reads LTEEVEQL. Residues 304-325 are compositionally biased toward low complexity; that stretch reads AGSSGSGASSHHNHNSNDSSNG. 2 disordered regions span residues 304–345 and 465–498; these read AGSS…SPLD and TPVS…LVSL. Residues 333–343 show a composition bias toward polar residues; that stretch reads TLNSTGRSNSP. At serine 342 the chain carries Phosphoserine.

The protein belongs to the bZIP family. Fos subfamily. Homodimer. Heterodimer with Jra. The kay-Jra heterodimer binds more stably to the AP-1 site than either of the two proteins alone.

The protein localises to the nucleus. In terms of biological role, developmentally regulated transcription factor AP-1 binds and recognizes the enhancer DNA sequence: 5'-TGA[CG]TCA-3'. May play a role in the function or determination of a particular subset of cells in the developing embryo. It is able to carry out its function either independently of or in conjunction with Jra. The protein is Transcription factor kayak of Drosophila simulans (Fruit fly).